The sequence spans 75 residues: UPF0154 protein MYPE400 (75 aa).

The helical transmembrane segment at 5–27 (IGLCLGLGIPISLIIGAVIGYYF) threads the bilayer.

It belongs to the UPF0154 family.

It is found in the membrane. The sequence is that of UPF0154 protein MYPE400 from Malacoplasma penetrans (strain HF-2) (Mycoplasma penetrans).